The primary structure comprises 564 residues: Arginine--tRNA ligase (564 aa).

A 'HIGH' region motif is present at residues 124-134 (PNIAKDMHVGH).

The protein belongs to the class-I aminoacyl-tRNA synthetase family. As to quaternary structure, monomer.

It localises to the cytoplasm. The catalysed reaction is tRNA(Arg) + L-arginine + ATP = L-arginyl-tRNA(Arg) + AMP + diphosphate. The polypeptide is Arginine--tRNA ligase (Chlamydia caviae (strain ATCC VR-813 / DSM 19441 / 03DC25 / GPIC) (Chlamydophila caviae)).